A 77-amino-acid chain; its full sequence is uncharacterized protein (77 aa).

Residues 1-15 show a composition bias toward polar residues; the sequence is MNRTSESVEPQQNEK. 2 disordered regions span residues 1–20 and 31–52; these read MNRTSESVEPQQNEKTAVHW and TYSNEDDEDNEEGDESRPQRTF. Residues 33–44 show a composition bias toward acidic residues; that stretch reads SNEDDEDNEEGD.

This is an uncharacterized protein from Schizosaccharomyces pombe (strain 972 / ATCC 24843) (Fission yeast).